Here is a 238-residue protein sequence, read N- to C-terminus: Lipid transferase CIDEC (238 aa).

A required for liquid-liquid phase separation (LLPS) region spans residues 1–35 (MDYAMKSLSLLYPRSLSRHVAVSTAVVTQQLVSEP). Residues 41–118 (RARPCRVSTA…VLQKGQKWKS (78 aa)) form the CIDE-N domain.

It belongs to the CIDE family. In terms of assembly, homodimer. Interacts with CIDEA. Homooligomer; undergoes liquid-liquid phase separation (LLPS) via its N-terminus, facilitating lipid droplet fusion, occurs at the lipid droplet contact sites. Interacts with PLIN1. Interacts with NFAT5; this interaction is direct and retains NFAT5 in the cytoplasm. Interacts with CEBPB. Interacts with isoform CLSTN3beta of CLSTN3; inhibiting the lipid transferase activity of CIDEC. Post-translationally, ubiquitinated and targeted to proteasomal degradation, resulting in a short half-life (about 15 minutes in 3T3-L1 cells). Protein stability depends on triaclyglycerol synthesis, fatty acid availability and lipid droplet formation.

Its subcellular location is the lipid droplet. It is found in the endoplasmic reticulum. The protein localises to the nucleus. The enzyme catalyses a triacyl-sn-glycerol(in) = a triacyl-sn-glycerol(out). Functionally, lipid transferase specifically expressed in white adipose tissue, which promotes unilocular lipid droplet formation by mediating lipid droplet fusion. Lipid droplet fusion promotes their enlargement, restricting lipolysis and favoring lipid storage. Localizes on the lipid droplet surface, at focal contact sites between lipid droplets, and mediates atypical lipid droplet fusion by undergoing liquid-liquid phase separation (LLPS) and promoting directional net neutral lipid transfer from the smaller to larger lipid droplets. The transfer direction may be driven by the internal pressure difference between the contacting lipid droplet pair. Its role in neutral lipid transfer and lipid droplet enlargement is activated by the interaction with PLIN1. May also act as a CEBPB coactivator in the white adipose tissue to control the expression of a subset of CEBPB downstream target genes, including SOCS1, SOCS3, TGFB1, TGFBR1, ID2 and XDH. When overexpressed in preadipocytes, induces apoptosis or increases cell susceptibility to apoptosis induced by serum deprivation or TGFB treatment. The sequence is that of Lipid transferase CIDEC from Rattus norvegicus (Rat).